The following is a 575-amino-acid chain: V-type ATP synthase alpha chain (575 aa).

238–245 (GPFGAGKT) serves as a coordination point for ATP.

It belongs to the ATPase alpha/beta chains family.

It catalyses the reaction ATP + H2O + 4 H(+)(in) = ADP + phosphate + 5 H(+)(out). Its function is as follows. Produces ATP from ADP in the presence of a proton gradient across the membrane. The V-type alpha chain is a catalytic subunit. The chain is V-type ATP synthase alpha chain from Borreliella burgdorferi (strain ZS7) (Borrelia burgdorferi).